Consider the following 842-residue polypeptide: Elongation factor 2 (842 aa).

Residues 17–346 enclose the tr-type G domain; it reads TNVRNMSVIA…MIVLHLPSPV (330 aa). Residues 26–33, 158–161, and 213–215 contribute to the GTP site; these read AHVDHGKS, NKVD, and SGL. The residue at position 509 (lysine 509) is an N6,N6,N6-trimethyllysine; by EFM3; alternate. An N6,N6-dimethyllysine; by EFM3; alternate modification is found at lysine 509. Lysine 509 carries the N6-methyllysine; by EFM3; alternate modification. The residue at position 579 (serine 579) is a Phosphoserine. Lysine 613 bears the N6,N6-dimethyllysine; by EFM2; alternate mark. Residue lysine 613 is modified to N6-methyllysine; by EFM2; alternate. Histidine 699 carries the diphthamide modification. Residues threonine 713 and threonine 763 each carry the phosphothreonine modification. A Glycyl lysine isopeptide (Lys-Gly) (interchain with G-Cter in ubiquitin) cross-link involves residue lysine 841.

It belongs to the TRAFAC class translation factor GTPase superfamily. Classic translation factor GTPase family. EF-G/EF-2 subfamily. In terms of assembly, binds to 80S ribosomes. Actively translating ribosomes show mutually exclusive binding of eIF5a (HYP2 or ANB1) and EFT1/eEF2. Interacts with the 40S ribosomal subunit protein RPL9A; the interaction is direct. Interacts with the 60S ribosomal subunit proteins RPL12A; the interaction is direct. Interacts with RPS23A; the interaction is direct. Interacts with 18S rRNA; the interaction is direct. Interacts with 25S rRNA; the interaction is direct. Interacts with RPL0. Interacts with STM1; promoting ribosome inactivation. Post-translationally, (Microbial infection) Diphthamide can be ADP-ribosylated by diphtheria toxin and by Pseudomonas exotoxin A, thus abolishing its function.

The protein resides in the cytoplasm. The catalysed reaction is GTP + H2O = GDP + phosphate + H(+). It functions in the pathway protein biosynthesis; polypeptide chain elongation. Inhibited by fusidic acid and sordarin, which prevent the release of eEF2 from the ribosome after the translocation step. While fusidic acid acts on all eukaryotic eEF2, sordarin specifically binds and inhibits only selected fungal eEF2. Its function is as follows. Catalyzes the GTP-dependent ribosomal translocation step during translation elongation. During this step, the ribosome changes from the pre-translocational (PRE) to the post-translocational (POST) state as the newly formed A-site-bound peptidyl-tRNA and P-site-bound deacylated tRNA move to the P and E sites, respectively. Catalyzes the coordinated movement of the two tRNA molecules, the mRNA and conformational changes in the ribosome. This Saccharomyces cerevisiae (strain ATCC 204508 / S288c) (Baker's yeast) protein is Elongation factor 2 (EFT1).